The sequence spans 163 residues: Large ribosomal subunit protein uL10 (163 aa).

Belongs to the universal ribosomal protein uL10 family. Part of the ribosomal stalk of the 50S ribosomal subunit. The N-terminus interacts with L11 and the large rRNA to form the base of the stalk. The C-terminus forms an elongated spine to which L12 dimers bind in a sequential fashion forming a multimeric L10(L12)X complex.

In terms of biological role, forms part of the ribosomal stalk, playing a central role in the interaction of the ribosome with GTP-bound translation factors. The polypeptide is Large ribosomal subunit protein uL10 (Haemophilus influenzae (strain PittEE)).